The sequence spans 561 residues: Developmental and secondary metabolism regulator veA (561 aa).

Disordered stretches follow at residues 1-23 (MANRPSLMPPHNETEHSVSRITR), 41-60 (ARACGAGAKSSADRRPVDPP), and 258-361 (AYAR…PQGI). The span at 12 to 23 (NETEHSVSRITR) shows a compositional bias: basic and acidic residues. The Velvet domain maps to 25-233 (GKQLTYKLSV…AEQGCRVRIR (209 aa)). Residues 39-44 (ERARAC) carry the Nuclear localization signal motif. Positions 258–268 (AYARSSDRFTT) are enriched in basic and acidic residues. A compositionally biased stretch (polar residues) spans 324 to 339 (SHSQTPSYQSHLSFGS). Pro residues predominate over residues 347-357 (PHMPPTPPPVA). Positions 438-485 (RPQTPNLPAMPPPKPLSNDYANHVVPSVECTSPGGSGGGGYDNVRGKR) are PEST. Positions 491–524 (GPTYGKRSHEDTFGLDDRSMQNGMRPDTEPYPAY) are disordered. The segment covering 497 to 509 (RSHEDTFGLDDRS) has biased composition (basic and acidic residues).

The protein belongs to the velvet family. VeA subfamily. Component of the heterotrimeric velvet complex composed of laeA, veA and velB; velA acting as a bridging protein between laeA and velB. Interacts with kapA. Interacts with vosA and velc.

It is found in the nucleus. Its subcellular location is the cytoplasm. Functionally, component of the velvet transcription factor complex that controls sexual/asexual developmental ratio in response to light, promoting sexual development in the darkness while stimulating asexual sporulation under illumination. The velvet complex acts as a global regulator for secondary metabolite gene expression. Controls the expression of the penicillin gene cluster. Positively controls the expression of the class V chitinase chiB1. Positively controls the expression of the transcription factor atfA. Required for cell wall integrity and controls hyphal branching. This Penicillium rubens (strain ATCC 28089 / DSM 1075 / NRRL 1951 / Wisconsin 54-1255) (Penicillium chrysogenum) protein is Developmental and secondary metabolism regulator veA.